A 386-amino-acid chain; its full sequence is Acetylornithine aminotransferase (386 aa).

Residues 96-97 and Phe123 contribute to the pyridoxal 5'-phosphate site; that span reads GA. Arg126 lines the N(2)-acetyl-L-ornithine pocket. 208–211 serves as a coordination point for pyridoxal 5'-phosphate; sequence DEVQ. Residue Lys237 is modified to N6-(pyridoxal phosphate)lysine. Residue Ser265 coordinates N(2)-acetyl-L-ornithine. Thr266 is a binding site for pyridoxal 5'-phosphate.

Belongs to the class-III pyridoxal-phosphate-dependent aminotransferase family. ArgD subfamily. Homodimer. Pyridoxal 5'-phosphate serves as cofactor.

The protein resides in the cytoplasm. It catalyses the reaction N(2)-acetyl-L-ornithine + 2-oxoglutarate = N-acetyl-L-glutamate 5-semialdehyde + L-glutamate. It participates in amino-acid biosynthesis; L-arginine biosynthesis; N(2)-acetyl-L-ornithine from L-glutamate: step 4/4. This Bacillus anthracis protein is Acetylornithine aminotransferase.